A 314-amino-acid polypeptide reads, in one-letter code: MSEAALDLAPDAGAAAPPSWETIAPPAPGELLVVVGPTASGKTELAIRLAERFGGEVVSADSVQIYREFDLGSGKPTPAERARAAHHLVDAVDPLQAIDAQRFAELAEAAIDDIRGRGRVPVVCGGTFLWVKALVLGLSPAPPADPEARARHRAIADAEGRAALHARLAAVDPESAARLAPNDLVRVSRALEIYERSGRTQSAWHAEHGFRERRHAARLLAVHRDRAELDHRIEARVAGWLEQGWVDEVRSLLSRGYGDARAMGSVGYRQVREHLEGRLPADELAPAIVRATRTFVRRQRTWLRDQAVAYVALP.

An ATP-binding site is contributed by 36 to 43; that stretch reads GPTASGKT. Position 38 to 43 (38 to 43) interacts with substrate; it reads TASGKT. The interval 61–64 is interaction with substrate tRNA; the sequence is DSVQ.

Belongs to the IPP transferase family. In terms of assembly, monomer. Requires Mg(2+) as cofactor.

The catalysed reaction is adenosine(37) in tRNA + dimethylallyl diphosphate = N(6)-dimethylallyladenosine(37) in tRNA + diphosphate. Its function is as follows. Catalyzes the transfer of a dimethylallyl group onto the adenine at position 37 in tRNAs that read codons beginning with uridine, leading to the formation of N6-(dimethylallyl)adenosine (i(6)A). The polypeptide is tRNA dimethylallyltransferase (Sorangium cellulosum (strain So ce56) (Polyangium cellulosum (strain So ce56))).